The chain runs to 544 residues: Protein angel homolog 2 (544 aa).

It belongs to the CCR4/nocturin family.

The polypeptide is Protein angel homolog 2 (ANGEL2) (Homo sapiens (Human)).